We begin with the raw amino-acid sequence, 411 residues long: Phosphoglycerate kinase (411 aa).

Substrate contacts are provided by residues 28–30 (DIN), Arg-45, 68–71 (HQSR), Arg-125, and Arg-165. ATP-binding positions include Glu-338 and 364 to 367 (GGHL).

It belongs to the phosphoglycerate kinase family. As to quaternary structure, homodimer.

The protein resides in the cytoplasm. It catalyses the reaction (2R)-3-phosphoglycerate + ATP = (2R)-3-phospho-glyceroyl phosphate + ADP. It participates in carbohydrate degradation; glycolysis; pyruvate from D-glyceraldehyde 3-phosphate: step 2/5. The protein is Phosphoglycerate kinase (pgk) of Methanothermobacter thermautotrophicus (strain ATCC 29096 / DSM 1053 / JCM 10044 / NBRC 100330 / Delta H) (Methanobacterium thermoautotrophicum).